We begin with the raw amino-acid sequence, 205 residues long: MKMQSNVIKIIIVISLLIGVGALYLLLSLRTPEKPLAGQVNIYEDNVKIGGDFELIDQNGEIFNSDELKGNLSLIYFGFTSCPDICPTSLNKMTEIVEILNKHKIDILPVFITIDPKRDTPIVLKEYLKHFHPKFIGLTGNEQQIKGVTDKFKVFYARVNGDDDDPNYMLDHSSFTYLIDANGKYLKHFYLDSSPKEIMEFLKGN.

Cys82, Cys86, and His172 together coordinate Cu cation.

It belongs to the SCO1/2 family.

The chain is SCO2-like protein RF_0960 from Rickettsia felis (strain ATCC VR-1525 / URRWXCal2) (Rickettsia azadi).